We begin with the raw amino-acid sequence, 243 residues long: MDGWERAFVLHGRPYSETSLMLDMFTEGHGRVRLLAKGARSRRSNLKGCLQPFTPLLVRWGGRGEVKTLRSAEAVSLGLPLSGMMLYSGLYVNELLSRVLEQEANYSVLFFDYLQCLQALAAEDVSPEQALRQFELALLNHLGYGLDFLHCAGSGLPVDDGMTYRYREEKGFIASLVVDHYSFTGRELRALAERQFPDVQTLRAAKRFTRMALKPYLGGKPLKSRELFRQFVRKQPDPPVDDA.

Belongs to the RecO family.

Functionally, involved in DNA repair and RecF pathway recombination. In Serratia proteamaculans (strain 568), this protein is DNA repair protein RecO.